The chain runs to 296 residues: Nucleotide-binding protein SZO_12220 (296 aa).

Gly-13–Thr-20 serves as a coordination point for ATP. Residue Asp-63–Ser-66 participates in GTP binding.

Belongs to the RapZ-like family.

In terms of biological role, displays ATPase and GTPase activities. The chain is Nucleotide-binding protein SZO_12220 from Streptococcus equi subsp. zooepidemicus (strain H70).